The chain runs to 142 residues: MRHKIKGRKLNVTSSHRKAMLANMAVSLVTHEQIKTTLPKAKELRPYIEVLVTKAKDNNLAARRNILSKIKDKKAIEKLIDVLGVRYKDRPGGYTRIVKAGFRYGDLAPIAYIEFVDRDINAKGNIPQDNSKEDIKSNKGTK.

This sequence belongs to the bacterial ribosomal protein bL17 family. Part of the 50S ribosomal subunit. Contacts protein L32.

The sequence is that of Large ribosomal subunit protein bL17 from Rickettsia bellii (strain OSU 85-389).